The following is a 294-amino-acid chain: UDP-3-O-acyl-N-acetylglucosamine deacetylase (294 aa).

Zn(2+) is bound by residues H75, H232, and D236. H259 acts as the Proton donor in catalysis.

This sequence belongs to the LpxC family. Zn(2+) serves as cofactor.

It carries out the reaction a UDP-3-O-[(3R)-3-hydroxyacyl]-N-acetyl-alpha-D-glucosamine + H2O = a UDP-3-O-[(3R)-3-hydroxyacyl]-alpha-D-glucosamine + acetate. It functions in the pathway glycolipid biosynthesis; lipid IV(A) biosynthesis; lipid IV(A) from (3R)-3-hydroxytetradecanoyl-[acyl-carrier-protein] and UDP-N-acetyl-alpha-D-glucosamine: step 2/6. Its function is as follows. Catalyzes the hydrolysis of UDP-3-O-myristoyl-N-acetylglucosamine to form UDP-3-O-myristoylglucosamine and acetate, the committed step in lipid A biosynthesis. In Campylobacter lari (strain RM2100 / D67 / ATCC BAA-1060), this protein is UDP-3-O-acyl-N-acetylglucosamine deacetylase.